The primary structure comprises 370 residues: Ferrochelatase (370 aa).

Fe cation is bound by residues H210 and E291.

Belongs to the ferrochelatase family.

It localises to the cytoplasm. It catalyses the reaction heme b + 2 H(+) = protoporphyrin IX + Fe(2+). The protein operates within porphyrin-containing compound metabolism; protoheme biosynthesis; protoheme from protoporphyrin-IX: step 1/1. Its function is as follows. Catalyzes the ferrous insertion into protoporphyrin IX. The protein is Ferrochelatase of Marinobacter nauticus (strain ATCC 700491 / DSM 11845 / VT8) (Marinobacter aquaeolei).